A 1578-amino-acid chain; its full sequence is Neurexin-3 (1578 aa).

Positions 1–27 (MSFTLHSVFFTLKVSSFLGSLVGLCLG) are cleaved as a signal peptide. Residues 28 to 202 (LEFMGLPNQW…SVQLEAEGPC (175 aa)) form the Laminin G-like 1 domain. Residues 28–1503 (LEFMGLPNQW…EVIRESNSTT (1476 aa)) are Extracellular-facing. Asn58 and Asn105 each carry an N-linked (GlcNAc...) asparagine glycan. One can recognise an EGF-like 1 domain in the interval 198–235 (AEGPCGERPCENGGICFLLDGHPTCDCSTTGYGGTLCS). 3 cysteine pairs are disulfide-bonded: Cys202/Cys213, Cys207/Cys222, and Cys224/Cys234. Laminin G-like domains lie at 260–444 (ENVA…VFKC) and 451–643 (DPIN…KSSC). Ca(2+) contacts are provided by Asp308, Leu325, and Met378. Intrachain disulfides connect Cys408–Cys444, Cys614–Cys643, Cys651–Cys662, Cys656–Cys671, and Cys673–Cys683. An EGF-like 2 domain is found at 647-684 (SAKQCDSYPCKNNAVCKDGWNRFICDCTGTGYWGRTCE). Laminin G-like domains are found at residues 689–861 (ILSY…IDYC) and 875–1050 (DPVT…DRGC). Residues Asp736 and Leu753 each coordinate Ca(2+). An N-linked (GlcNAc...) asparagine glycan is attached at Asn761. Arg811 serves as a coordination point for Ca(2+). Disulfide bonds link Cys1022–Cys1050, Cys1057–Cys1068, Cys1062–Cys1077, and Cys1079–Cys1089. An EGF-like 3 domain is found at 1053–1090 (PSTTCQEDSCANQGVCMQQWEGFTCDCSMTSYSGNQCN). The 201-residue stretch at 1094-1294 (ATYIFGKSGG…NPNIKINGSV (201 aa)) folds into the Laminin G-like 6 domain. Residues Asp1146 and Ile1163 each coordinate Ca(2+). Asn1193 is a glycosylation site (N-linked (GlcNAc...) asparagine). Residues Ile1245 and Asn1247 each coordinate Ca(2+). N-linked (GlcNAc...) asparagine glycosylation is found at Asn1291 and Asn1335. Residues 1328–1352 (ATTTTRKNRSTASIQPTSDDLVSSA) form a disordered region. Residues 1337–1352 (STASIQPTSDDLVSSA) show a composition bias toward polar residues. Residue Ser1351 is glycosylated (O-linked (Xyl...) (heparan sulfate) serine). Asn1500 is a glycosylation site (N-linked (GlcNAc...) asparagine). The helical transmembrane segment at 1504–1524 (GMVVGIVAAAALCILILLYAM) threads the bilayer. The Cytoplasmic segment spans residues 1525-1578 (YKYRNRDEGSYQVDETRNYISNSAQSNGTLMKEKQASSKSGHKKQKNKDKEYYV). Residues 1546–1578 (NSAQSNGTLMKEKQASSKSGHKKQKNKDKEYYV) are disordered.

Belongs to the neurexin family. The laminin G-like domain 2 binds to NXPH1. Isoform 8/alpha-4B binds to alpha-dystroglycan. The cytoplasmic C-terminal region binds to CASK. Specific isoforms bind neuroligins NLGN1, NLGN2 and NLGN3. Interacts with CLSTN3. O-glycosylated; contains heparan sulfate. Heparan sulfate attachment is required for synapse development by mediating interactions with neuroligins. As to expression, brain.

It localises to the presynaptic cell membrane. Neuronal cell surface protein that may be involved in cell recognition and cell adhesion. May mediate intracellular signaling. The polypeptide is Neurexin-3 (Nrxn3) (Rattus norvegicus (Rat)).